Reading from the N-terminus, the 443-residue chain is Serine/threonine-protein phosphatase 2A 55 kDa regulatory subunit B beta isoform (443 aa).

4 WD repeats span residues 22 to 61 (TEAD…KNQV), 87 to 128 (EIEE…KRPE), 171 to 209 (AHTY…QSFN), and 220 to 260 (ELTE…CVTG). A Phosphoserine modification is found at Ser275. WD repeat units lie at residues 279 to 317 (KLSS…RPIE), 334 to 375 (ENDC…DVTL), and 410 to 442 (DFSK…QDKV). A Phosphothreonine modification is found at Thr298.

Belongs to the phosphatase 2A regulatory subunit B family. PP2A consists of a common heterodimeric core enzyme, composed of a 36 kDa catalytic subunit (subunit C) and a 65 kDa constant regulatory subunit (PR65 or subunit A), that associates with a variety of regulatory subunits. Proteins that associate with the core dimer include three families of regulatory subunits B (the R2/B/PR55/B55, R3/B''/PR72/PR130/PR59 and R5/B'/B56 families), the 48 kDa variable regulatory subunit, viral proteins, and cell signaling molecules. Interacts with TOMM22. Interacts with IER5 (via N- and C-terminal regions). In terms of tissue distribution, brain.

The protein localises to the cytoplasm. The protein resides in the cytoskeleton. Its subcellular location is the membrane. Functionally, the B regulatory subunit might modulate substrate selectivity and catalytic activity, and might also direct the localization of the catalytic enzyme to a particular subcellular compartment. This chain is Serine/threonine-protein phosphatase 2A 55 kDa regulatory subunit B beta isoform (PPP2R2B), found in Sus scrofa (Pig).